We begin with the raw amino-acid sequence, 266 residues long: Histidinol-phosphatase (266 aa).

Positions 69, 84, 86, and 87 each coordinate Mg(2+). Substrate is bound at residue Glu-69. Residues 86 to 89, Arg-190, and Asp-218 each bind substrate; that span reads IDGT. Asp-218 is a Mg(2+) binding site.

The protein belongs to the inositol monophosphatase superfamily. Requires Mg(2+) as cofactor.

The catalysed reaction is L-histidinol phosphate + H2O = L-histidinol + phosphate. It participates in amino-acid biosynthesis; L-histidine biosynthesis; L-histidine from 5-phospho-alpha-D-ribose 1-diphosphate: step 8/9. Its function is as follows. Catalyzes the dephosphorylation of histidinol-phosphate to histidinol, the direct precursor of histidine. The protein is Histidinol-phosphatase of Streptomyces coelicolor (strain ATCC BAA-471 / A3(2) / M145).